An 825-amino-acid chain; its full sequence is Arabinolytic transcriptional activator araR (825 aa).

A compositionally biased stretch (polar residues) spans 1-17; sequence MASSHQGNGTVPNSQTD. The interval 1-28 is disordered; the sequence is MASSHQGNGTVPNSQTDAPPDSSTKRRW. The zn(2)-C6 fungal-type DNA-binding region spans 35–61; it reads CDSCHARRVRCDRQFPCSRCLRSEITC. The disordered stretch occupies residues 117-152; the sequence is STFHHRSPPANAPTVSAPSVDGRRSQTDPQLPVRRP.

This sequence belongs to the xlnR/xlr1 family. araR subfamily.

It is found in the nucleus. In terms of biological role, transcriptional activator of the arabinanolytic system. Involved in the regulation of extracellular arabinanolytic genes and in the regulation of the intracellular activities of L-arabinose catabolic genes in the pentose catabolic pathway (PCP) in response to the presence of L-arabinose. This is Arabinolytic transcriptional activator araR from Emericella nidulans (strain FGSC A4 / ATCC 38163 / CBS 112.46 / NRRL 194 / M139) (Aspergillus nidulans).